Here is an 840-residue protein sequence, read N- to C-terminus: SLIT and NTRK-like protein 6 (840 aa).

The signal sequence occupies residues M1–L18. One can recognise an LRRNT 1 domain in the interval S22–F67. Over P23–L609 the chain is Extracellular. LRR repeat units lie at residues N89–G110, L113–G134, N137–K158, R161–F182, and P184–E205. The LRRCT 1 domain occupies N218–T269. In terms of domain architecture, LRRNT 2 spans P319–P360. LRR repeat units lie at residues N363–D384, T387–N408, R411–G432, S435–P456, K459–G480, and P482–D503. The 52-residue stretch at N516–G567 folds into the LRRCT 2 domain. Residues I610 to F630 form a helical membrane-spanning segment. The Cytoplasmic portion of the chain corresponds to V631–T840. Residues Q717 to H726 are compositionally biased toward basic and acidic residues. The disordered stretch occupies residues Q717–Y736. Polar residues predominate over residues S727–Y736.

This sequence belongs to the SLITRK family. In terms of tissue distribution, in the embryo, expressed in otic cyst, lateral trunk epidermis and underlying mesodermal tissue, limb bud, maxillary process, cochlea, retina, tongue, tooth primordium, central nervous system, and primordia of visceral organs including lung, gastrointestinal tract and pancreas. In the central nervous system, expressed primarily in dorsal thalamus, cerebellum and medulla.

Its subcellular location is the cell membrane. Its function is as follows. Regulator of neurite outgrowth required for normal hearing and vision. In Mus musculus (Mouse), this protein is SLIT and NTRK-like protein 6 (Slitrk6).